A 382-amino-acid chain; its full sequence is Lipid-A-disaccharide synthase (382 aa).

It belongs to the LpxB family.

The enzyme catalyses 2-N,3-O-bis[(3R)-3-hydroxytetradecanoyl]-alpha-D-glucosaminyl 1-phosphate + UDP-2-N,3-O-bis[(3R)-3-hydroxytetradecanoyl]-alpha-D-glucosamine = lipid A disaccharide (E. coli) + UDP + H(+). The catalysed reaction is a lipid X + a UDP-2-N,3-O-bis[(3R)-3-hydroxyacyl]-alpha-D-glucosamine = a lipid A disaccharide + UDP + H(+). Its pathway is glycolipid biosynthesis; lipid IV(A) biosynthesis; lipid IV(A) from (3R)-3-hydroxytetradecanoyl-[acyl-carrier-protein] and UDP-N-acetyl-alpha-D-glucosamine: step 5/6. Its function is as follows. Condensation of UDP-2,3-diacylglucosamine and 2,3-diacylglucosamine-1-phosphate to form lipid A disaccharide, a precursor of lipid A, a phosphorylated glycolipid that anchors the lipopolysaccharide to the outer membrane of the cell. The chain is Lipid-A-disaccharide synthase from Salmonella agona (strain SL483).